The primary structure comprises 207 residues: Inhibitor of hydrogen peroxide resistance (207 aa).

The H-T-H motif DNA-binding region spans 163–182; the sequence is MNYIHQRTRISRSVVAEVLA.

The protein belongs to the IprA family.

Involved in oxidative stress resistance. The protein is Inhibitor of hydrogen peroxide resistance of Escherichia coli O157:H7.